The chain runs to 240 residues: Uridylate kinase (240 aa).

14 to 17 (KLSG) contacts ATP. G56 is a binding site for UMP. ATP-binding residues include G57 and R61. Residues D76 and 137–144 (TGNPFFTT) each bind UMP. The ATP site is built by T164, Y170, and D173.

This sequence belongs to the UMP kinase family. Homohexamer.

The protein localises to the cytoplasm. The enzyme catalyses UMP + ATP = UDP + ADP. The protein operates within pyrimidine metabolism; CTP biosynthesis via de novo pathway; UDP from UMP (UMPK route): step 1/1. Its activity is regulated as follows. Inhibited by UTP. In terms of biological role, catalyzes the reversible phosphorylation of UMP to UDP. This chain is Uridylate kinase, found in Verminephrobacter eiseniae (strain EF01-2).